The primary structure comprises 270 residues: Molybdenum-pterin-binding protein MopB (270 aa).

2 consecutive Mop domains span residues 131 to 197 (RTSA…LLAG) and 203 to 269 (RLSV…ILAL).

Belongs to the ModE family.

The chain is Molybdenum-pterin-binding protein MopB (mopB) from Rhodobacter capsulatus (Rhodopseudomonas capsulata).